A 387-amino-acid polypeptide reads, in one-letter code: S-adenosylmethionine synthase (387 aa).

Histidine 16 is an ATP binding site. Aspartate 18 is a Mg(2+) binding site. Glutamate 44 serves as a coordination point for K(+). The L-methionine site is built by glutamate 57 and glutamine 100. Residues 100 to 110 (QSPDIAQGVDE) form a flexible loop region. Residues 167–169 (DAK), 232–233 (RF), aspartate 241, 247–248 (RK), alanine 264, and lysine 268 contribute to the ATP site. An L-methionine-binding site is contributed by aspartate 241. Lysine 272 contributes to the L-methionine binding site.

The protein belongs to the AdoMet synthase family. As to quaternary structure, homotetramer; dimer of dimers. Mg(2+) serves as cofactor. K(+) is required as a cofactor.

Its subcellular location is the cytoplasm. It carries out the reaction L-methionine + ATP + H2O = S-adenosyl-L-methionine + phosphate + diphosphate. Its pathway is amino-acid biosynthesis; S-adenosyl-L-methionine biosynthesis; S-adenosyl-L-methionine from L-methionine: step 1/1. Its function is as follows. Catalyzes the formation of S-adenosylmethionine (AdoMet) from methionine and ATP. The overall synthetic reaction is composed of two sequential steps, AdoMet formation and the subsequent tripolyphosphate hydrolysis which occurs prior to release of AdoMet from the enzyme. The chain is S-adenosylmethionine synthase from Janthinobacterium sp. (strain Marseille) (Minibacterium massiliensis).